A 249-amino-acid chain; its full sequence is UPF0758 protein Oant_1909 (249 aa).

In terms of domain architecture, MPN spans 127-249; the sequence is VLGSWNKVIE…HASFRGLGLI (123 aa). His198, His200, and Asp211 together coordinate Zn(2+). Positions 198–211 match the JAMM motif motif; that stretch reads HNHPSGDPTPSRAD.

This sequence belongs to the UPF0758 family.

The sequence is that of UPF0758 protein Oant_1909 from Brucella anthropi (strain ATCC 49188 / DSM 6882 / CCUG 24695 / JCM 21032 / LMG 3331 / NBRC 15819 / NCTC 12168 / Alc 37) (Ochrobactrum anthropi).